Consider the following 289-residue polypeptide: Dermonecrotic toxin LarSicTox-betaID1 (289 aa).

The signal sequence occupies residues 1-2; it reads EG. The propeptide occupies 3–11; it reads AEQDGSERT. His22 is an active-site residue. 2 residues coordinate Mg(2+): Glu42 and Asp44. The active-site Nucleophile is the His58. Intrachain disulfides connect Cys62–Cys68 and Cys64–Cys207. Mg(2+) is bound at residue Asp102.

It belongs to the arthropod phospholipase D family. Class II subfamily. Mg(2+) serves as cofactor. Expressed by the venom gland.

The protein resides in the secreted. The catalysed reaction is an N-(acyl)-sphingosylphosphocholine = an N-(acyl)-sphingosyl-1,3-cyclic phosphate + choline. It carries out the reaction N-hexanoyl-sphing-4-enine-1-phosphocholine = N-(hexanoyl)-sphing-4-enine-1,3-cyclic phosphate + choline. It catalyses the reaction N-(dodecanoyl)-sphing-4-enine-1-phosphocholine = N-dodecanoyl-sphing-4-enine-1,3-cyclic phosphate + choline. The enzyme catalyses an N-(acyl)-sphingosylphosphoethanolamine = an N-(acyl)-sphingosyl-1,3-cyclic phosphate + ethanolamine. The catalysed reaction is N-dodecanoyl-heptadecasphing-4-enine-1-phosphoethanolamine = N-dodecanoyl-heptadecasphing-4-enine-1,3-cyclic phosphate + ethanolamine. It carries out the reaction a 1-acyl-sn-glycero-3-phosphocholine = a 1-acyl-sn-glycero-2,3-cyclic phosphate + choline. It catalyses the reaction 1-tetradecanoyl-sn-glycero-3-phosphocholine = 1-tetradecanoyl-sn-glycero-2,3-cyclic phosphate + choline. The enzyme catalyses 1-octanoyl-sn-glycero-3-phosphocholine = 1-octanoyl-sn-glycero-2,3-cyclic phosphate + choline. The catalysed reaction is a 1-acyl-sn-glycero-3-phosphoethanolamine = a 1-acyl-sn-glycero-2,3-cyclic phosphate + ethanolamine. It carries out the reaction 1-tetradecanoyl-sn-glycero-3-phosphoethanolamine = 1-tetradecanoyl-sn-glycero-2,3-cyclic phosphate + ethanolamine. Dermonecrotic toxins cleave the phosphodiester linkage between the phosphate and headgroup of certain phospholipids (sphingolipid and lysolipid substrates), forming an alcohol (often choline) and a cyclic phosphate. This toxin acts on sphingomyelin (SM) and on ceramide phosphoethanolamine (CPE) with high activity. It also acts on lysophosphatidylcholine (LPC) and on lysophosphatidylethanolamine (LPE) with moderate activity. It is not active on lysophosphatidylserine (LPS), and lysophosphatidylglycerol (LPG). It acts by transphosphatidylation, releasing exclusively cyclic phosphate as second products. It is not surprising that spider toxins have affinity for ethanolamine-containing sphingolipids since they are common in insect prey. On mammals, induces dermonecrosis, hemolysis, increased vascular permeability, edema, inflammatory response, and platelet aggregation. The protein is Dermonecrotic toxin LarSicTox-betaID1 of Loxosceles arizonica (Arizona brown spider).